A 92-amino-acid chain; its full sequence is Cytochrome c2 (92 aa).

Residues Cys12, Cys15, His16, and Met66 each coordinate heme c.

This sequence belongs to the cytochrome c family. Binds 1 heme c group covalently per subunit.

Cytochrome c2 is found mainly in purple, non-sulfur, photosynthetic bacteria where it functions as the electron donor to the oxidized bacteriochlorophyll in the photophosphorylation pathway. However, it may also have a role in the respiratory chain and is found in some non-photosynthetic bacteria. This Rhodocyclus tenuis (Rhodospirillum tenue) protein is Cytochrome c2.